A 297-amino-acid chain; its full sequence is Iron/alpha-ketoglutarate-dependent dioxygenase ausU (297 aa).

Positions 130, 132, and 206 each coordinate Fe cation.

Belongs to the PhyH family. As to quaternary structure, homodimer. Fe cation is required as a cofactor.

The protein operates within secondary metabolite biosynthesis; terpenoid biosynthesis. Its function is as follows. Iron/alpha-ketoglutarate-dependent dioxygenase; part of the gene cluster that mediates the biosynthesis of calidodehydroaustin, a fungal meroterpenoid. The first step of the pathway is the synthesis of 3,5-dimethylorsellinic acid by the polyketide synthase ausA. 3,5-dimethylorsellinic acid is then prenylated by the polyprenyl transferase ausN. Further epoxidation by the FAD-dependent monooxygenase ausM and cyclization by the probable terpene cyclase ausL lead to the formation of protoaustinoid A. Protoaustinoid A is then oxidized to spiro-lactone preaustinoid A3 by the combined action of the FAD-binding monooxygenases ausB and ausC, and the dioxygenase ausE. Acid-catalyzed keto-rearrangement and ring contraction of the tetraketide portion of preaustinoid A3 by ausJ lead to the formation of preaustinoid A4. The aldo-keto reductase ausK, with the help of ausH, is involved in the next step by transforming preaustinoid A4 into isoaustinone which is in turn hydroxylated by the P450 monooxygenase ausI to form austinolide. The cytochrome P450 monooxygenase ausG modifies austinolide to austinol. Austinol is further acetylated to austin by the O-acetyltransferase ausP, which spontaneously changes to dehydroaustin. The cytochrome P450 monooxygenase ausR then converts dehydroaustin is into 7-dehydrodehydroaustin. The hydroxylation catalyzed by ausR permits the O-acetyltransferase ausQ to add an additional acetyl group to the molecule, leading to the formation of acetoxydehydroaustin. The short chain dehydrogenase ausT catalyzes the reduction of the double bond present between carbon atoms 1 and 2 to convert 7-dehydrodehydroaustin into 1,2-dihydro-7-hydroxydehydroaustin. AusQ catalyzes not only an acetylation reaction but also the addition of the PKS ausV diketide product to 1,2-dihydro-7-hydroxydehydroaustin, forming precalidodehydroaustin. Finally, the iron/alpha-ketoglutarate-dependent dioxygenase converts precalidodehydroaustin into calidodehydroaustin. The sequence is that of Iron/alpha-ketoglutarate-dependent dioxygenase ausU from Aspergillus calidoustus.